The chain runs to 454 residues: MRYLPHTPEEISEMLQAVGLSSLEELYSAIPKEARLTRPLSMEPSLDEASLMRHLEELAQKNRAGRMLSFLGAGAYEHHFPPAADQLLLRSEFYTAYTPYQPEVSQGTLQVIFEFQTIVSEILGLPIANASMYDGASALAEAVLMARRLTGRERTVLSGGVHPDYIGTVETYVHGIGAGKASLVGVDVGRDGTADVEALTRAIDETTACVVVGYPNFFGVVGDIRKVAEVCHQKGALLITVTLDPYALALLESPGALGADIAVAEGQPLGLPPQYGGPNVGLFACRNDRKYLQQVPGRLVGETVDKHGTRGYVLTLATREQHIRRERATSNICTNSGLCATAVTMRMCMLGKRGFVEAAKQCLAKAEHLKREIARLEGYSLPMSAPTFHEFVVKVRGGDAGKLTRALAEQGIIAGLDLGRIDARRRDELLVAVTERHSRADLDRLVAGLAGFTP.

It belongs to the GcvP family. N-terminal subunit subfamily. The glycine cleavage system is composed of four proteins: P, T, L and H. In this organism, the P 'protein' is a heterodimer of two subunits.

The enzyme catalyses N(6)-[(R)-lipoyl]-L-lysyl-[glycine-cleavage complex H protein] + glycine + H(+) = N(6)-[(R)-S(8)-aminomethyldihydrolipoyl]-L-lysyl-[glycine-cleavage complex H protein] + CO2. Functionally, the glycine cleavage system catalyzes the degradation of glycine. The P protein binds the alpha-amino group of glycine through its pyridoxal phosphate cofactor; CO(2) is released and the remaining methylamine moiety is then transferred to the lipoamide cofactor of the H protein. The sequence is that of Probable glycine dehydrogenase (decarboxylating) subunit 1 from Sorangium cellulosum (strain So ce56) (Polyangium cellulosum (strain So ce56)).